The primary structure comprises 259 residues: Secretion system apparatus protein SsaT (259 aa).

The next 6 helical transmembrane spans lie at 9–29, 35–55, 78–98, 127–147, 185–205, and 214–234; these read LIAL…LPLL, GAAL…LPII, VIIG…VDMA, LLFS…EFIL, ISFS…LGLL, and VFFF…LISF.

It belongs to the FliR/MopE/SpaR family.

The protein localises to the cell membrane. In terms of biological role, part of a type III secretion system. In Salmonella typhimurium (strain LT2 / SGSC1412 / ATCC 700720), this protein is Secretion system apparatus protein SsaT (ssaT).